We begin with the raw amino-acid sequence, 100 residues long: Ribosomal processing cysteine protease Prp (100 aa).

His-16 (proton donor) is an active-site residue. The active-site Nucleophile is Cys-28.

It belongs to the Prp family. Homodimer.

Functionally, an essential cysteine protease that cleaves the N-terminus from ribosomal protein bL27. The polypeptide is Ribosomal processing cysteine protease Prp (Mycoplasma pneumoniae (strain ATCC 29342 / M129 / Subtype 1) (Mycoplasmoides pneumoniae)).